Here is a 210-residue protein sequence, read N- to C-terminus: MIYIVALTGGICSGKTTVSDRFKKIGINVIDTDVIGRKIIEKNKKISDSIKKKFGKKILNKDNSINRFLLRNCIFNEKKSRLWLENILHPEILKKSKKKIKLIQSTWCLWVVPLLFEKKIQKKANRILLIDTPIRIQIRRMIKRDKININEAKKIISYQVRRKKRISLSDDIILNKNKNIEKLSLYIHYLNNFYIYLSKQNNPKNMKKII.

In terms of domain architecture, DPCK spans Ile-4–Asn-201. An ATP-binding site is contributed by Cys-12–Thr-17.

It belongs to the CoaE family.

The protein localises to the cytoplasm. It catalyses the reaction 3'-dephospho-CoA + ATP = ADP + CoA + H(+). It participates in cofactor biosynthesis; coenzyme A biosynthesis; CoA from (R)-pantothenate: step 5/5. In terms of biological role, catalyzes the phosphorylation of the 3'-hydroxyl group of dephosphocoenzyme A to form coenzyme A. The sequence is that of Dephospho-CoA kinase from Buchnera aphidicola subsp. Schizaphis graminum (strain Sg).